Here is a 322-residue protein sequence, read N- to C-terminus: Fructose-1,6-bisphosphatase class 1 3 (322 aa).

Residues Glu84, Asp103, Leu105, and Asp106 each contribute to the Mg(2+) site. Substrate is bound by residues 106–109 (DGSS), Asn198, and Lys262. Glu268 serves as a coordination point for Mg(2+).

It belongs to the FBPase class 1 family. In terms of assembly, homotetramer. It depends on Mg(2+) as a cofactor.

It is found in the cytoplasm. It carries out the reaction beta-D-fructose 1,6-bisphosphate + H2O = beta-D-fructose 6-phosphate + phosphate. It participates in carbohydrate biosynthesis; gluconeogenesis. The protein is Fructose-1,6-bisphosphatase class 1 3 of Pseudoalteromonas translucida (strain TAC 125).